A 94-amino-acid polypeptide reads, in one-letter code: Large ribosomal subunit protein uL23 (94 aa).

The protein belongs to the universal ribosomal protein uL23 family. In terms of assembly, part of the 50S ribosomal subunit. Contacts protein L29, and trigger factor when it is bound to the ribosome.

In terms of biological role, one of the early assembly proteins it binds 23S rRNA. One of the proteins that surrounds the polypeptide exit tunnel on the outside of the ribosome. Forms the main docking site for trigger factor binding to the ribosome. The polypeptide is Large ribosomal subunit protein uL23 (Listeria monocytogenes serotype 4b (strain CLIP80459)).